A 1128-amino-acid polypeptide reads, in one-letter code: Mastermind-like protein 2 (1128 aa).

Disordered stretches follow at residues 1 to 22 and 81 to 167; these read MGDT…GAGL and QHGQ…GDQR. Positions 12 to 22 are enriched in gly residues; that stretch reads GGLGGAPGAGL. Low complexity predominate over residues 113–122; it reads PTASQTAAPA. Phosphoserine is present on Ser-177. 5 disordered regions span residues 343 to 509, 521 to 649, 677 to 714, 758 to 794, and 1039 to 1073; these read FNID…GSNQ, SPSA…SNQP, QVSQ…GYMN, QDQI…GSST, and GTGL…QGTD. 2 stretches are compositionally biased toward polar residues: residues 347-357 and 374-387; these read LGQQSQRSTPR and GLTQ…QLRP. Positions 395–426 are enriched in low complexity; sequence SMASSGLSASSPIPSVPQSQAQPPPATGAARA. Polar residues predominate over residues 431 to 446; it reads QEVSHAQQLKQIAANR. 2 stretches are compositionally biased toward low complexity: residues 453 to 473 and 484 to 497; these read HQQQ…SAGP and PSPS…SPQS. The span at 566–584 shows a compositional bias: polar residues; that stretch reads NSDQANQQMPSVLPSQSKP. The span at 590–649 shows a compositional bias: low complexity; the sequence is TQQQPQQSSITVQPQQQQQQPQQQQQPQQQQQPQPQQQQQQQPQAQQPAAQPTQPLSNQP. Composition is skewed to polar residues over residues 677–695, 778–794, and 1039–1052; these read QVSQ…QNAG, NVGN…GSST, and GTGL…SQPP.

Belongs to the mastermind family. As to quaternary structure, interacts through its N-terminal region with the ankyrin repeat region of the Notch proteins NOTCH1, NOTCH2, NOTCH3 and NOTCH4. Forms a DNA-binding complex with Notch proteins and RBPSUH/RBP-J kappa.

The protein resides in the nucleus speckle. Functionally, acts as a transcriptional coactivator for NOTCH proteins. Has been shown to amplify NOTCH-induced transcription of HES1. Potentiates activation by NOTCH3 and NOTCH4 more efficiently than MAML1 or MAML3. The polypeptide is Mastermind-like protein 2 (MAML2) (Bos taurus (Bovine)).